The following is a 99-amino-acid chain: UPF0473 protein LEUM_0559 (99 aa).

The protein belongs to the UPF0473 family.

This Leuconostoc mesenteroides subsp. mesenteroides (strain ATCC 8293 / DSM 20343 / BCRC 11652 / CCM 1803 / JCM 6124 / NCDO 523 / NBRC 100496 / NCIMB 8023 / NCTC 12954 / NRRL B-1118 / 37Y) protein is UPF0473 protein LEUM_0559.